The following is a 280-amino-acid chain: Putative pyruvate, phosphate dikinase regulatory protein (280 aa).

Residue 152-159 (GVSRTSKS) participates in ADP binding.

It belongs to the pyruvate, phosphate/water dikinase regulatory protein family. PDRP subfamily.

It carries out the reaction N(tele)-phospho-L-histidyl/L-threonyl-[pyruvate, phosphate dikinase] + ADP = N(tele)-phospho-L-histidyl/O-phospho-L-threonyl-[pyruvate, phosphate dikinase] + AMP + H(+). The catalysed reaction is N(tele)-phospho-L-histidyl/O-phospho-L-threonyl-[pyruvate, phosphate dikinase] + phosphate + H(+) = N(tele)-phospho-L-histidyl/L-threonyl-[pyruvate, phosphate dikinase] + diphosphate. In terms of biological role, bifunctional serine/threonine kinase and phosphorylase involved in the regulation of the pyruvate, phosphate dikinase (PPDK) by catalyzing its phosphorylation/dephosphorylation. The sequence is that of Putative pyruvate, phosphate dikinase regulatory protein from Anaplasma phagocytophilum (strain HZ).